The chain runs to 218 residues: MTWPAFIDHQRTQPYYQQLIAFVNQERQVGKVIYPPKEDVFNAFKTTPLEQVRVVLIGQDPYHGPDQAHGLCFSVKRGVKAPPSLANMYKELVNDIPGFHIPNHGDLTQWAEQGILMLNTVLTVEQGQAHSHANAGWEIFTTEALKLLNAQERPIIFVLWGSHAIKKGAVITAPQHQILSGPHPSPLSAYRGFFGCGHFSKVNQLLMARGEAPIQWQI.

Asp60 acts as the Proton acceptor in catalysis.

The protein belongs to the uracil-DNA glycosylase (UDG) superfamily. UNG family.

It localises to the cytoplasm. It carries out the reaction Hydrolyzes single-stranded DNA or mismatched double-stranded DNA and polynucleotides, releasing free uracil.. Functionally, excises uracil residues from the DNA which can arise as a result of misincorporation of dUMP residues by DNA polymerase or due to deamination of cytosine. The polypeptide is Uracil-DNA glycosylase (Shewanella oneidensis (strain ATCC 700550 / JCM 31522 / CIP 106686 / LMG 19005 / NCIMB 14063 / MR-1)).